The chain runs to 894 residues: Translation initiation factor IF-2 (894 aa).

Residues 52-301 (DRGAAPNKLT…RRPSTLTQGF (250 aa)) form a disordered region. Polar residues predominate over residues 68 to 82 (STLNIPSTGGKSKSV). The span at 107–154 (EQARREAEELAQHQVQRDAEEKAKRAAEDKAKREAAEQAKRVAAESDK) shows a compositional bias: basic and acidic residues. The segment covering 155 to 168 (LTNQQTNTMTKSPQ) has biased composition (polar residues). Basic and acidic residues-rich tracts occupy residues 171–214 (EKAR…ERGG) and 237–254 (HAREAEDENDRKVEGDRR). Positions 255–269 (SRTRGGKATKQKKTS) are enriched in basic residues. Residues 270 to 283 (RLSESKADREEARA) show a composition bias toward basic and acidic residues. Residues 393-562 (SRAPVVTIMG…LLQAEVLELK (170 aa)) form the tr-type G domain. The tract at residues 402-409 (GHVDHGKT) is G1. 402-409 (GHVDHGKT) provides a ligand contact to GTP. The tract at residues 427–431 (GITQH) is G2. Residues 448-451 (DTPG) are G3. Residues 448-452 (DTPGH) and 502-505 (NKID) contribute to the GTP site. The segment at 502–505 (NKID) is G4. Residues 538–540 (SAK) form a G5 region.

It belongs to the TRAFAC class translation factor GTPase superfamily. Classic translation factor GTPase family. IF-2 subfamily.

The protein resides in the cytoplasm. Its function is as follows. One of the essential components for the initiation of protein synthesis. Protects formylmethionyl-tRNA from spontaneous hydrolysis and promotes its binding to the 30S ribosomal subunits. Also involved in the hydrolysis of GTP during the formation of the 70S ribosomal complex. In Sodalis glossinidius (strain morsitans), this protein is Translation initiation factor IF-2.